Reading from the N-terminus, the 117-residue chain is Transcription elongation factor A protein-like 8 (117 aa).

A disordered region spans residues 1-82 (MQKSCDENEG…EEVIRGVDEL (82 aa)). Residues 41–82 (NVREETEGSHRGEPAEPSPEPKEDTPARHLNPEEVIRGVDEL) show a composition bias toward basic and acidic residues. The stretch at 73–100 (EEVIRGVDELERLREEIRRVRNKFVLMH) forms a coiled coil.

The protein belongs to the TFS-II family. TFA subfamily.

It is found in the nucleus. May be involved in transcriptional regulation. The polypeptide is Transcription elongation factor A protein-like 8 (Tceal8) (Mus musculus (Mouse)).